We begin with the raw amino-acid sequence, 492 residues long: Chitooligosaccharide oxidase (492 aa).

Positions 1–19 (MHFNTLTCVLVGLVAHTSA) are cleaved as a signal peptide. The region spanning 57–229 (LPFEPAAIAV…VELEFQTFAA (173 aa)) is the FAD-binding PCMH-type domain. The segment at residues 94 to 154 (HSYTSLGFGG…GKRALAHGTC (61 aa)) is a cross-link (6-(S-cysteinyl)-8alpha-(pros-histidyl)-FAD (His-Cys)).

This sequence belongs to the oxygen-dependent FAD-linked oxidoreductase family. The cofactor is FAD. In terms of processing, the FAD cofactor is bound via a bicovalent 6-S-cysteinyl, 8alpha-N1-histidyl FAD linkage.

It is found in the secreted. It catalyses the reaction N,N'-diacetylchitobiose + O2 = N,N'-diacetylchitobiono-1,5-lactone + H2O2. It carries out the reaction N,N',N''-triacetylchitotriose + O2 = N,N',N''-triacetylchitotriono-1,5-lactone + H2O2. The enzyme catalyses N,N',N'',N'''-tetraacetylchitotetraose + O2 = N,N',N'',N'''-tetraacetylchitotetraono-1,5-lactone + H2O2. Its function is as follows. Catalyzes the selective oxidation of C1 hydroxyl moieties on chitooligosaccharides with concomitant reduction of molecular oxygen to hydrogen peroxide. This results in the formation of the corresponding lactones, which typically undergo spontaneous hydrolysis. Chitooligosaccharides are homo- or heterooligomers of N-acetylglucosamine (GlcNAc) and D-glucosamine which are linked through beta-1,4-glycosidic bonds. For optimal substrate binding at least 2 GlcNAc units are needed, and chitooligosaccharide oxidase is most efficient on chitobiose, chitotriose and chitotetraose. This chain is Chitooligosaccharide oxidase, found in Gibberella zeae (strain ATCC MYA-4620 / CBS 123657 / FGSC 9075 / NRRL 31084 / PH-1) (Wheat head blight fungus).